Reading from the N-terminus, the 154-residue chain is MTQDHKLQVEAIRCGTVIDHIPAQVGFKLLSLFKLTETDQRITIGLNLPSNRLGKKDLIKIENTFLTEQQANQLAMYAPNATVNCIENYEVVKKLPINLPKCIDNVLVCPNSNCISHNEPVESSFRVKVTVEDVVLTCKYCEKEFDRNVVILND.

Residues Cys109, Cys114, Cys138, and Cys141 each coordinate Zn(2+).

Belongs to the PyrI family. As to quaternary structure, contains catalytic and regulatory chains. It depends on Zn(2+) as a cofactor.

Involved in allosteric regulation of aspartate carbamoyltransferase. The chain is Aspartate carbamoyltransferase regulatory chain from Photorhabdus laumondii subsp. laumondii (strain DSM 15139 / CIP 105565 / TT01) (Photorhabdus luminescens subsp. laumondii).